Reading from the N-terminus, the 485-residue chain is Pyruvate kinase (485 aa).

Arg33 contacts substrate. K(+)-binding residues include Asn35, Ser37, Asp67, and Thr68. 35–38 (NFSH) provides a ligand contact to ATP. ATP is bound by residues Arg74 and Lys155. Residue Glu221 participates in Mg(2+) binding. Substrate contacts are provided by Gly244, Asp245, and Thr277. Position 245 (Asp245) interacts with Mg(2+).

It belongs to the pyruvate kinase family. As to quaternary structure, homotetramer. The cofactor is Mg(2+). Requires K(+) as cofactor.

It carries out the reaction pyruvate + ATP = phosphoenolpyruvate + ADP + H(+). Its pathway is carbohydrate degradation; glycolysis; pyruvate from D-glyceraldehyde 3-phosphate: step 5/5. This is Pyruvate kinase (pyk) from Chlamydia trachomatis serovar L2 (strain ATCC VR-902B / DSM 19102 / 434/Bu).